The chain runs to 280 residues: Chaperone protein LppX (280 aa).

Positions 1–18 (MRKWLIFLLIAAVAGLSA) are cleaved as a signal peptide. Residue C19 is the site of N-palmitoyl cysteine attachment. C19 carries S-diacylglycerol cysteine lipidation.

The protein localises to the cell membrane. In terms of biological role, is required for the expression of the adjacently encoded xylanase Xyn11E in an active form. LppX seems to act as a specific chaperone necessary for the correct folding of the xylanase during secretion across the cytoplasmic membrane. This Paenibacillus barcinonensis protein is Chaperone protein LppX.